A 449-amino-acid chain; its full sequence is Tubulin alpha-B chain (449 aa).

Residues Gln11, Glu71, Ser140, Gly144, Thr145, Thr179, Asn206, and Asn228 each coordinate GTP. A Mg(2+)-binding site is contributed by Glu71. Glu254 is an active-site residue.

Belongs to the tubulin family. As to quaternary structure, dimer of alpha and beta chains. A typical microtubule is a hollow water-filled tube with an outer diameter of 25 nm and an inner diameter of 15 nM. Alpha-beta heterodimers associate head-to-tail to form protofilaments running lengthwise along the microtubule wall with the beta-tubulin subunit facing the microtubule plus end conferring a structural polarity. Microtubules usually have 13 protofilaments but different protofilament numbers can be found in some organisms and specialized cells. The cofactor is Mg(2+).

The protein localises to the cytoplasm. It is found in the cytoskeleton. The catalysed reaction is GTP + H2O = GDP + phosphate + H(+). In terms of biological role, tubulin is the major constituent of microtubules, a cylinder consisting of laterally associated linear protofilaments composed of alpha- and beta-tubulin heterodimers. Microtubules grow by the addition of GTP-tubulin dimers to the microtubule end, where a stabilizing cap forms. Below the cap, tubulin dimers are in GDP-bound state, owing to GTPase activity of alpha-tubulin. This is Tubulin alpha-B chain (tba-2) from Neurospora crassa (strain ATCC 24698 / 74-OR23-1A / CBS 708.71 / DSM 1257 / FGSC 987).